An 880-amino-acid chain; its full sequence is Alanine--tRNA ligase (880 aa).

His567, His571, Cys669, and His673 together coordinate Zn(2+).

Belongs to the class-II aminoacyl-tRNA synthetase family. It depends on Zn(2+) as a cofactor.

It localises to the cytoplasm. It catalyses the reaction tRNA(Ala) + L-alanine + ATP = L-alanyl-tRNA(Ala) + AMP + diphosphate. In terms of biological role, catalyzes the attachment of alanine to tRNA(Ala) in a two-step reaction: alanine is first activated by ATP to form Ala-AMP and then transferred to the acceptor end of tRNA(Ala). Also edits incorrectly charged Ser-tRNA(Ala) and Gly-tRNA(Ala) via its editing domain. In Syntrophomonas wolfei subsp. wolfei (strain DSM 2245B / Goettingen), this protein is Alanine--tRNA ligase.